The primary structure comprises 748 residues: Meprin A subunit alpha (748 aa).

The signal sequence occupies residues 1–20; it reads MLWTLPVCLLSLSFSAHIAA. A propeptide spanning residues 21–66 is cleaved from the precursor; the sequence is VSIQHLSTGHDHDDVDVGEQQKDISEINSAAGLNLFQGDILLPRTR. A Peptidase M12A domain is found at 67–261; sequence NALRDPSSRW…TRLNRMYNCT (195 aa). Topologically, residues 67–719 are extracellular; it reads NALRDPSSRW…RCQAMHVHGS (653 aa). 3 cysteine pairs are disulfide-bonded: cysteine 108/cysteine 260, cysteine 129/cysteine 148, and cysteine 270/cysteine 432. An N-linked (GlcNAc...) asparagine glycan is attached at asparagine 141. Histidine 156 serves as a coordination point for Zn(2+). Residue glutamate 157 is part of the active site. Positions 160 and 166 each coordinate Zn(2+). Residues asparagine 223, asparagine 259, asparagine 319, asparagine 441, and asparagine 542 are each glycosylated (N-linked (GlcNAc...) asparagine). An MAM domain is found at 265–434; it reads TLLDHCAFEK…ITLTETPCPT (170 aa). Residues 435–596 form the MATH domain; that stretch reads GVWTIRNISQ…DDTLIIFVDF (162 aa). Positions 641 to 668 are disordered; the sequence is LPRRLDQRQPSRPKRSVENTGPMEDHNW. In terms of domain architecture, EGF-like spans 672–712; it reads FRDPCDPNPCQNEGTCVNVKGMASCRCVSGHAFFYTGERCQ. 3 cysteine pairs are disulfide-bonded: cysteine 676-cysteine 687, cysteine 681-cysteine 696, and cysteine 698-cysteine 711. Residues 720-739 form a helical membrane-spanning segment; sequence LLGLLIGCITALIFLTFITF. Over 740 to 748 the chain is Cytoplasmic; it reads SNTYQKLRQ.

Homotetramer consisting of disulfide-linked alpha subunits, homooligomer consisting of disulfide-linked alpha subunit homodimers, or heterotetramer of two alpha and two beta subunits formed by non-covalent association of two disulfide-linked heterodimers. Interacts with MBL2 through its carbohydrate moiety. This interaction may inhibit its catalytic activity. The cofactor is Zn(2+). In terms of processing, N-glycosylated; contains GlcNAc, galactose, mannose and a small amount of fucose. Colocalized with E-24.11 in proximal tubules of juxtamedullary nephrons.

It localises to the membrane. The catalysed reaction is Hydrolysis of protein and peptide substrates preferentially on carboxyl side of hydrophobic residues.. With respect to regulation, inhibited by actinonin. This is Meprin A subunit alpha (Mep1a) from Rattus norvegicus (Rat).